We begin with the raw amino-acid sequence, 377 residues long: MQRLALAGTRAIVDMSYARHFLDFQGSAIPSKMQKLVVTRLSPNFREAVTLRRDCPVPLPGDGDLLVRNRFVGVNASDINYSAGRYDPSVKTPFDAGFEGVGEVVALGLSASAAFMVGQAVAYMAPGSFAEYTVVPARVAIPVPGLKPEYLTLLVSGTTAYISLKELGGLSEGKKVLVTAAAGGTGQFAVQLAKKAKCHVIGTCSSAEKSAFLKSVGCDRPINYNTEHVGTVLRQEYPQGVDVVYESVGGAMFDLAVDALATRGRLIVIGFVSGYQTPTGLSPVKAGTLPAKLLKKSASVQGFFLNHYLPEFRGAMDHLLKMYAGGELVCEVDTGGLSAEGRFTGLESVFRAVDYMYMRKNTGKIVVELPPSVNSKL.

Lysine 35 is subject to N6-acetyllysine. 7 residues coordinate NADP(+): threonine 185, serine 205, lysine 209, tyrosine 224, serine 247, isoleucine 269, and tyrosine 275. The residue at position 299 (serine 299) is a Phosphoserine. NADP(+) contacts are provided by residues 303 to 305 (FFL) and asparagine 361.

Belongs to the zinc-containing alcohol dehydrogenase family. Quinone oxidoreductase subfamily.

It is found in the peroxisome. The enzyme catalyses 13,14-dihydro-15-oxo-prostaglandin E2 + NADP(+) = 15-oxoprostaglandin E2 + NADPH + H(+). The catalysed reaction is 13,14-dihydro-15-oxo-prostaglandin E1 + NADP(+) = 15-oxoprostaglandin E1 + NADPH + H(+). It catalyses the reaction 13,14-dihydro-15-oxo-PGF2alpha + NADP(+) = 15-oxoprostaglandin F2alpha + NADPH + H(+). It carries out the reaction 13,14-dihydro-15-oxo-prostaglandin F1alpha + NADP(+) = 15-oxoprostaglandin F1alpha + NADPH + H(+). Its function is as follows. Functions as 15-oxo-prostaglandin 13-reductase and acts on 15-keto-PGE1, 15-keto-PGE2, 15-keto-PGE1-alpha and 15-keto-PGE2-alpha with highest efficiency towards 15-keto-PGE2-alpha. Overexpression represses transcriptional activity of PPARG and inhibits adipocyte differentiation. The chain is Prostaglandin reductase-3 (PTGR3) from Bos taurus (Bovine).